The primary structure comprises 369 residues: Protein phosphatase 1 regulatory inhibitor subunit PPP1R8 homolog (369 aa).

Basic and acidic residues predominate over residues 1-11 (MYGRSGLDRFK). The disordered stretch occupies residues 1–26 (MYGRSGLDRFKKSQTSEPFSVSANPP). Polar residues predominate over residues 13 to 23 (SQTSEPFSVSA). An FHA domain is found at 87-138 (HIFGRQHQTCDFVLDHQSVSRQHAAVVPHKNGSIFVIDLGSAHGTFVANERL). Positions 345–369 (VSQPAAETECGGVGEEDDNDDLFGD) are disordered. The span at 358–369 (GEEDDNDDLFGD) shows a compositional bias: acidic residues.

As to quaternary structure, interacts with human protein phosphatase PPP1C.

Its function is as follows. Inhibitor of protein-phosphatase 1 (PP1). Binds to and inhibits PP1 activity. The protein is Protein phosphatase 1 regulatory inhibitor subunit PPP1R8 homolog of Arabidopsis thaliana (Mouse-ear cress).